The chain runs to 416 residues: Exodeoxyribonuclease 7 large subunit (416 aa).

The disordered stretch occupies residues 1–21; sequence MTEPDSKPKKGRAGRKKAEPV.

Belongs to the XseA family. In terms of assembly, heterooligomer composed of large and small subunits.

The protein localises to the cytoplasm. The catalysed reaction is Exonucleolytic cleavage in either 5'- to 3'- or 3'- to 5'-direction to yield nucleoside 5'-phosphates.. Functionally, bidirectionally degrades single-stranded DNA into large acid-insoluble oligonucleotides, which are then degraded further into small acid-soluble oligonucleotides. This Deinococcus radiodurans (strain ATCC 13939 / DSM 20539 / JCM 16871 / CCUG 27074 / LMG 4051 / NBRC 15346 / NCIMB 9279 / VKM B-1422 / R1) protein is Exodeoxyribonuclease 7 large subunit.